Reading from the N-terminus, the 316-residue chain is Olfactory receptor 2H1 (316 aa).

At M1–R23 the chain is on the extracellular side. Residue N3 is glycosylated (N-linked (GlcNAc...) asparagine). Residues T24 to S47 traverse the membrane as a helical segment. Residues V48 to S55 are Cytoplasmic-facing. A helical transmembrane segment spans residues P56 to P77. Over Q78–Q98 the chain is Extracellular. C95 and C187 are disulfide-bonded. A helical membrane pass occupies residues L99–F118. The Cytoplasmic segment spans residues D119 to R137. The helical transmembrane segment at L138–V156 threads the bilayer. Over Q157–N193 the chain is Extracellular. Residues E194–G217 form a helical membrane-spanning segment. Residues A218–K234 are Cytoplasmic-facing. Residues A235 to Y257 traverse the membrane as a helical segment. Residues L258–K270 lie on the Extracellular side of the membrane. A helical membrane pass occupies residues F271–L290. Topologically, residues R291 to A316 are cytoplasmic.

This sequence belongs to the G-protein coupled receptor 1 family.

The protein resides in the cell membrane. Functionally, odorant receptor. In Homo sapiens (Human), this protein is Olfactory receptor 2H1 (OR2H1).